Reading from the N-terminus, the 1772-residue chain is MSKRTQDLATTHANGSVDSATAPGASKRRRLADPVLDTPVELLASGRRTSGRHRPVEDASRQATQQQQAPGTPGGRQQRRAAAAAKESLSTPKRAPAKPKEKTPKATPKKTPSRRNGRRRSVKVEEVEEEEPEEEEGPEEEEAPEEEVEGDDEEEVQVEEEAEPVSLTPLEEKKQELAKLISDNDSRVRLLFHLKQFVSLVFYDPAEAKQDQSSVWEQVSMRESIIGTRTRLTQFQQNYDLWTKYLERKTGGHMRSTRRQIRSKQGALEDDFVIKLKEEMTAVEEEEEEELVEEEEEEEEEEEQEEDEEQEQQEEEEEEQEEEVTSRRGSRRSAPTKAKGKSKTASKTSKSKSKASSKSKSKSKGKGQARASKLSKSRRYVNAVDSSSEEESDYDPNKPYDVSKEVWEPIDTGWLLPDSEDEYYHFDDKFAQHMFPNGVKLKLNVSLKPPRVTHPAHLLLDVAEGQTPDNRERLEGFMSSFKLLDEEMTLEEYEEHYERELETLDKINEMKREGVLQGLADEEEGESLTVAEIRRGFNDPERSTRPTHWDHVVAQACHFAKLMADERKAHVSQAKRLAAAVDQHFRRLEGAEERDKKAQAKLLKTMARKMAQDVMRRWKLAEKVVLKKKEQEAKEEERKQGKKKLKEILENSAQLLEARVRGDNDTPETEEGEKEEVEAVSDDAMSDVDMEDDREQVEVDTRDDDELTVEELRAKYAALDNIKVERAEEEDEEDEENGDDEDEDEEEDDAEIEEETETTTPALETPIDTPAEEDEFSSDTDITLDSEDESSSEQESDYEAETTAPGLAALMGGPKAIEEDEEEDDAFVIKEEEEEVEVEDDEEEEKADTEVDRKVETVSEAVGEAVEEIKSNGVESKPTSNGVDVTELDRVTPERAPAVEPPFLLRGTLRAYQQLGLEWLAGLYNNDTNGILADEMGLGKTIQTISLLSYLACEHHIWGPHLIIVPTSVMLNWEMEFKRFAPGFKVMTYYGNPVQRREKRRGWNKEDTWHVCITSYQLVLQDLFAFRRKRWHYMILDEAHNIKNFRSQRWQSLLHFNTVRRLLLTGTPLQNNLMELWSLLYFLMPSSRNQMDMPGFANLKDFQEWFSRPIDKMVEGGVDEEAKTTVSKLHQILRPYLLRRLKKDVEKQMPAKYEHVVYCRLSKRQRYLYDDFMSRAQTRETLKTGNFLSIINCLMQLRKVCNHPDLFEVRPIVTSFVQEQSVITPYERVSDRVKSLLVNTVDGGYAPSEVSLSFLGFNAELEDMSTHEATSFRKYHNVQTVKNRIRELEKFCPAETPEEERYNDIEGHYKHMHHASFQQVIGSLKRVEYLHQIALAKKPVYGRNLVEVCTINTSRLQPDRPEETNESSYHWQLTHLRHPTVQECANNMAPYIERFACITPKAVTLNMAELSLGGIGPILQQRYFKQVTPKKSQRVVVGPPAAIADPFHQAQVKLSIAFPDKRLLQYDCGKLQRLATLLQDLIAGGHRALIFTQMTKVLDVLEQFLNIHGLRYMRLDGATKIEQRQLLTERFNTDPKIPVFILSTRSGGLGINLTGADTVIFYDSDWNPSMDKQCQDRCHRIGQTRDVHIYRFVSEHTIESNILKKANQKQILDNVVIQDGEFTTDYFNKMSVHDMLGLEPDDDAAPVADTLNLSGKNLERALAQAEDADDAAAAKVATKETNLDVEDFDETQKENNKGATPGSRSTSATPMEKENTGELSSAMDSPTPVATPDVAVDNGGGDDDDSDSDESDSGIGHIDEYMIKFIEDGWFW.

Disordered stretches follow at residues methionine 1–leucine 170 and alanine 282–valine 402. Polar residues predominate over residues aspartate 7–serine 19. Residues arginine 61–glycine 71 show a composition bias toward low complexity. Over residues threonine 107–serine 121 the composition is skewed to basic residues. Composition is skewed to acidic residues over residues glutamate 126–glutamate 163 and alanine 282–glutamate 323. Residues alanine 338–arginine 379 show a composition bias toward basic residues. Residues glycine 536–lysine 609 enclose the HSA domain. A disordered region spans residues leucine 656 to lysine 854. 4 stretches are compositionally biased toward acidic residues: residues aspartate 665–glutamate 695, alanine 727–glutamate 757, proline 770–alanine 800, and glutamate 818–alanine 847. Residues alanine 921–serine 1086 form the Helicase ATP-binding domain. Aspartate 934 to threonine 941 is an ATP binding site. A DEAH box motif is present at residues aspartate 1037–histidine 1040. The region spanning lysine 1470–threonine 1623 is the Helicase C-terminal domain. The tract at residues threonine 1681–histidine 1757 is disordered. Over residues glycine 1740 to aspartate 1752 the composition is skewed to acidic residues.

It belongs to the SNF2/RAD54 helicase family. SWR1 subfamily. As to quaternary structure, component of the SWR1 chromatin-remodeling complex.

It localises to the nucleus. It carries out the reaction ATP + H2O = ADP + phosphate + H(+). Catalytic component of the SWR1 complex which mediates the ATP-dependent exchange of histone H2A for the H2A variant HZT1 leading to transcriptional regulation of selected genes by chromatin remodeling. The chain is Helicase SWR1 (SWR1) from Yarrowia lipolytica (strain CLIB 122 / E 150) (Yeast).